Reading from the N-terminus, the 437-residue chain is Trigger factor (437 aa).

The region spanning 165–251 (GDLVVIDFKG…LHTIKEKEKI (87 aa)) is the PPIase FKBP-type domain.

Belongs to the FKBP-type PPIase family. Tig subfamily.

The protein resides in the cytoplasm. It carries out the reaction [protein]-peptidylproline (omega=180) = [protein]-peptidylproline (omega=0). Its function is as follows. Involved in protein export. Acts as a chaperone by maintaining the newly synthesized protein in an open conformation. Functions as a peptidyl-prolyl cis-trans isomerase. This Nitratiruptor sp. (strain SB155-2) protein is Trigger factor.